A 152-amino-acid chain; its full sequence is Ubiquitin-conjugating enzyme E2 A (152 aa).

The UBC core domain occupies 4–150 (PARRRLMRDF…VSAIVEQSWR (147 aa)). The active-site Glycyl thioester intermediate is the Cys88. Ser120 is subject to Phosphoserine; by CDK9.

It belongs to the ubiquitin-conjugating enzyme family. As to quaternary structure, interacts with RAD18 and WAC. Interacts with RFPL4A and CCNB1. Phosphorylation at Ser-120 by CDK9 increases activity towards histone H2B.

It localises to the late endosome. The protein localises to the lysosome. It carries out the reaction S-ubiquitinyl-[E1 ubiquitin-activating enzyme]-L-cysteine + [E2 ubiquitin-conjugating enzyme]-L-cysteine = [E1 ubiquitin-activating enzyme]-L-cysteine + S-ubiquitinyl-[E2 ubiquitin-conjugating enzyme]-L-cysteine.. It functions in the pathway protein modification; protein ubiquitination. Functionally, E2 ubiquitin-conjugating enzyme that accepts ubiquitin from the ubiquitin-activating enzyme E1 and transfers it to a E3 ubiquitin-protein ligase. In vitro catalyzes 'Lys-11', as well as 'Lys-48'-linked polyubiquitination. Together with the E3 enzyme BRE1 (RNF20 and/or RNF40), plays a role in transcription regulation by catalyzing the monoubiquitination of histone H2B at 'Lys-120' to form H2BK120ub1. H2BK120ub1 gives a specific tag for epigenetic transcriptional activation, elongation by RNA polymerase II, telomeric silencing, and is also a prerequisite for H3K4me and H3K79me formation. Involved in mitophagy by acting as a E2 ubiquitin-conjugating enzyme for PRKN. In association with the E3 enzyme UBR4, is involved in N-end rule-dependent protein degradation. In association with the E3 ubiquitin-protein ligase complex SIFI, inhibits the mitochondrial stress response by acting as a E2 ubiquitin-conjugating enzyme for UBR4 and KCMF1. The polypeptide is Ubiquitin-conjugating enzyme E2 A (Homo sapiens (Human)).